The following is a 204-amino-acid chain: dCTP deaminase, dUMP-forming (204 aa).

DCTP-binding positions include 117–122, His128, Gly132, Asp135, 143–145, Gln163, Tyr177, Lys184, and Gln188; these read RSSLGR and TLE. Glu145 serves as the catalytic Proton donor/acceptor.

As to quaternary structure, homotrimer. Two trimers assemble into a hexamer by stacking on top of each other. Mg(2+) is required as a cofactor.

It catalyses the reaction dCTP + 2 H2O = dUMP + NH4(+) + diphosphate. It functions in the pathway pyrimidine metabolism; dUMP biosynthesis; dUMP from dCTP: step 1/1. Inhibited by dTTP. Bifunctional enzyme that catalyzes both the deamination of dCTP to dUTP and the hydrolysis of dUTP to dUMP without releasing the toxic dUTP intermediate. It also acts as a dUTP diphosphatase with a lower affinity for dUTP than for dCTP. The sequence is that of dCTP deaminase, dUMP-forming from Methanocaldococcus jannaschii (strain ATCC 43067 / DSM 2661 / JAL-1 / JCM 10045 / NBRC 100440) (Methanococcus jannaschii).